A 267-amino-acid polypeptide reads, in one-letter code: MSNETIKLVIAGPRGRMGQEAVKLAERTPHFDLVGAIDHTYDQQKLSDVMPVESDAFIYTDIHACFTETQPDVLIDLTTPEIGKVHTKIALEHGVRPVVGTTGFSEADLKELTSLTEEKGIGAIIAPNFALGAILMMKFSKMAANYFEDVEIIELHHDQKLDAPSGTALKTAEMISEVRKEKQQGHPDEKEILPGARGAEQNGIRLHSVRLPGLIAHQEVMFGMDGQTLQIRHDSYNRASFMSGVKLSVEQVMKIDQLVYGLENIID.

Residues 12 to 17, 100 to 102, and 126 to 129 each bind NAD(+); these read GPRGRM, GTT, and APNF. The Proton donor/acceptor role is filled by His-156. His-157 is a (S)-2,3,4,5-tetrahydrodipicolinate binding site. The active-site Proton donor is the Lys-160. 166–167 contacts (S)-2,3,4,5-tetrahydrodipicolinate; that stretch reads GT.

The protein belongs to the DapB family.

It localises to the cytoplasm. It carries out the reaction (S)-2,3,4,5-tetrahydrodipicolinate + NAD(+) + H2O = (2S,4S)-4-hydroxy-2,3,4,5-tetrahydrodipicolinate + NADH + H(+). The catalysed reaction is (S)-2,3,4,5-tetrahydrodipicolinate + NADP(+) + H2O = (2S,4S)-4-hydroxy-2,3,4,5-tetrahydrodipicolinate + NADPH + H(+). It functions in the pathway amino-acid biosynthesis; L-lysine biosynthesis via DAP pathway; (S)-tetrahydrodipicolinate from L-aspartate: step 4/4. Its function is as follows. Catalyzes the conversion of 4-hydroxy-tetrahydrodipicolinate (HTPA) to tetrahydrodipicolinate. This chain is 4-hydroxy-tetrahydrodipicolinate reductase, found in Bacillus subtilis (strain 168).